A 388-amino-acid chain; its full sequence is Succinate--CoA ligase [ADP-forming] subunit beta (388 aa).

One can recognise an ATP-grasp domain in the interval 9–244 (KQLFKEYGLP…PSQEDAREAH (236 aa)). Residues K46, 53-55 (GRG), E99, T102, and E107 contribute to the ATP site. Residues N199 and D213 each coordinate Mg(2+). Substrate is bound by residues N264 and 321–323 (GIV).

This sequence belongs to the succinate/malate CoA ligase beta subunit family. In terms of assembly, heterotetramer of two alpha and two beta subunits. It depends on Mg(2+) as a cofactor.

The enzyme catalyses succinate + ATP + CoA = succinyl-CoA + ADP + phosphate. The catalysed reaction is GTP + succinate + CoA = succinyl-CoA + GDP + phosphate. The protein operates within carbohydrate metabolism; tricarboxylic acid cycle; succinate from succinyl-CoA (ligase route): step 1/1. Succinyl-CoA synthetase functions in the citric acid cycle (TCA), coupling the hydrolysis of succinyl-CoA to the synthesis of either ATP or GTP and thus represents the only step of substrate-level phosphorylation in the TCA. The beta subunit provides nucleotide specificity of the enzyme and binds the substrate succinate, while the binding sites for coenzyme A and phosphate are found in the alpha subunit. The polypeptide is Succinate--CoA ligase [ADP-forming] subunit beta (Alteromonas mediterranea (strain DSM 17117 / CIP 110805 / LMG 28347 / Deep ecotype)).